The primary structure comprises 629 residues: MRRPKKYESGEATQYISRRAALRKLQLSLNDFRRLCILKGVYPREPKHRRRAQKGSSEIKVLYHTKDIRFLLHESIVWTLRDYKIFAKKSNRDRAIKDFRNLKRRLALFPEIKLDHIVKERYPTFIDALKDLDDCLTLLFLFSTFPSLHLIPREQSNLCRRLTIEFLHYVIASKSLRKVFISIKGYYFQAEIKGQKVTWIVPHYYPFKPQSRQEVDFKVMSIFVEFYTIMLGFTNFRLFHGLNLAYPPQFPSSVLQDSEESLKDEASFVSDRIAALNFELLRTDKVQEDEEELDIDMELLEQDGDSKRIIKMKQEAQEVSRLRTLFKGLKFFINREVPREPLVILIRSFGGKVSWDSSIFAGSTYDEGDETITHQIVDRPSITTQYISRDYIQPQWVFDCVNQRQLLPTNKYFIGETLPPHLSPFVDSKRDSYIPPEEKALLDPSLIETHAQSDEDSEDEAEKEEEETVDQELLDAQLQLAYQQETAEYKKYGGPDGVNEDEEDPEDDDEDDDEEEAEEEELDEKSKRLQEEKQKMSVQSGKVHKVNKRQVHKAEVDEHRLQARMVKPRHRNLFRKLIREKQTKEKEEWLLRKKRRTIEASEKEARKTAKREARKEAAAAAAKASKLGK.

Residues 321 to 414 (RLRTLFKGLK…QLLPTNKYFI (94 aa)) form the BRCT domain. Disordered regions lie at residues 439–470 (KALLDPSLIETHAQSDEDSEDEAEKEEEETVD), 488–568 (EYKK…MVKP), and 598–629 (IEASEKEARKTAKREARKEAAAAAAKASKLGK). Phosphoserine occurs at positions 453 and 457. Acidic residues-rich tracts occupy residues 454–470 (DEDSEDEAEKEEEETVD) and 498–523 (VNEDEEDPEDDDEDDDEEEAEEEELD). The span at 524–535 (EKSKRLQEEKQK) shows a compositional bias: basic and acidic residues. A compositionally biased stretch (basic residues) spans 542–551 (KVHKVNKRQV). Composition is skewed to basic and acidic residues over residues 552 to 561 (HKAEVDEHRL) and 598 to 617 (IEASEKEARKTAKREARKEA). Residues 584–627 (KEKEEWLLRKKRRTIEASEKEARKTAKREARKEAAAAAAKASKL) adopt a coiled-coil conformation. The segment covering 618–629 (AAAAAKASKLGK) has biased composition (low complexity).

The protein belongs to the pescadillo family.

Its subcellular location is the nucleus. The protein localises to the nucleolus. The protein resides in the nucleoplasm. Its function is as follows. Required for maturation of ribosomal RNAs and formation of the large ribosomal subunit. This Drosophila erecta (Fruit fly) protein is Pescadillo homolog.